The primary structure comprises 399 residues: Tryptophan synthase beta chain (399 aa).

Lys-90 is modified (N6-(pyridoxal phosphate)lysine).

This sequence belongs to the TrpB family. Tetramer of two alpha and two beta chains. Pyridoxal 5'-phosphate serves as cofactor.

The catalysed reaction is (1S,2R)-1-C-(indol-3-yl)glycerol 3-phosphate + L-serine = D-glyceraldehyde 3-phosphate + L-tryptophan + H2O. It functions in the pathway amino-acid biosynthesis; L-tryptophan biosynthesis; L-tryptophan from chorismate: step 5/5. The beta subunit is responsible for the synthesis of L-tryptophan from indole and L-serine. This chain is Tryptophan synthase beta chain, found in Phocaeicola vulgatus (strain ATCC 8482 / DSM 1447 / JCM 5826 / CCUG 4940 / NBRC 14291 / NCTC 11154) (Bacteroides vulgatus).